The primary structure comprises 359 residues: 3-dehydroquinate synthase (359 aa).

NAD(+)-binding positions include 71 to 76 (DGEQYK), 105 to 109 (GVIGD), 129 to 130 (TT), K142, K151, and 169 to 172 (CLST). Zn(2+) contacts are provided by E184, H247, and H264.

This sequence belongs to the sugar phosphate cyclases superfamily. Dehydroquinate synthase family. Co(2+) is required as a cofactor. It depends on Zn(2+) as a cofactor. The cofactor is NAD(+).

The protein resides in the cytoplasm. The catalysed reaction is 7-phospho-2-dehydro-3-deoxy-D-arabino-heptonate = 3-dehydroquinate + phosphate. It functions in the pathway metabolic intermediate biosynthesis; chorismate biosynthesis; chorismate from D-erythrose 4-phosphate and phosphoenolpyruvate: step 2/7. Its function is as follows. Catalyzes the conversion of 3-deoxy-D-arabino-heptulosonate 7-phosphate (DAHP) to dehydroquinate (DHQ). This Shewanella halifaxensis (strain HAW-EB4) protein is 3-dehydroquinate synthase.